Here is a 328-residue protein sequence, read N- to C-terminus: Testis-specific serine/threonine-protein kinase 4 (328 aa).

In terms of domain architecture, Protein kinase spans 25 to 293 (YEVGKAIGHG…ILDIIKDSWV (269 aa)). ATP is bound by residues 31-39 (IGHGSYGSV) and Lys54. The active-site Proton acceptor is the Asp148. At Thr197 the chain carries Phosphothreonine.

It belongs to the protein kinase superfamily. CAMK Ser/Thr protein kinase family. As to quaternary structure, homodimer. Interacts with HSP90; this interaction stabilizes and activates TSSK4. Interacts with ODF2 (via C-terminus); this interaction promotes ODF2 phosphorylation on 'Ser-95'. May interact with CREM. Interacts with CREB1; this interaction facilitates phosphorylation on 'Ser-133'. Interacts with QRICH2. Mg(2+) serves as cofactor. In terms of processing, activated by autophosphorylation on Thr-197. ODF2 potentiates the autophosphorylation activity of TSSK4 at Thr-197. Ubiquitinated; HSP90 activity negatively regulates ubiquitination and degradation. Expressed only in the testis.

It localises to the cytoplasmic vesicle. The protein localises to the secretory vesicle. Its subcellular location is the acrosome. It is found in the cell projection. The protein resides in the cilium. It localises to the flagellum. It carries out the reaction L-seryl-[protein] + ATP = O-phospho-L-seryl-[protein] + ADP + H(+). The catalysed reaction is L-threonyl-[protein] + ATP = O-phospho-L-threonyl-[protein] + ADP + H(+). With respect to regulation, activated by phosphorylation on Thr-197. Serine/threonine kinase which is involved in male germ cell development and in mature sperm function. May be involved in the Cre/Creb signaling pathway. Phosphorylates CREB1 on 'Ser-133' in vitro and can stimulate Cre/Creb pathway in cells. Phosphorylates CREM on 'Ser-116' in vitro. Phosphorylates ODF2 on 'Ser-95'. This chain is Testis-specific serine/threonine-protein kinase 4, found in Homo sapiens (Human).